The chain runs to 317 residues: Melanocyte-stimulating hormone receptor (317 aa).

At methionine 1–glutamate 37 the chain is on the extracellular side. A glycan (N-linked (GlcNAc...) asparagine) is linked at asparagine 29. Residues valine 38–isoleucine 63 form a helical membrane-spanning segment. The Cytoplasmic portion of the chain corresponds to alanine 64 to proline 72. A helical transmembrane segment spans residues methionine 73 to leucine 93. Residues glutamate 94–asparagine 118 lie on the Extracellular side of the membrane. The helical transmembrane segment at valine 119–valine 140 threads the bilayer. Residues aspartate 141–arginine 163 lie on the Cytoplasmic side of the membrane. The chain crosses the membrane as a helical span at residues valine 164–cysteine 183. Topologically, residues aspartate 184 to cysteine 191 are extracellular. The chain crosses the membrane as a helical span at residues leucine 192–leucine 211. The Cytoplasmic segment spans residues alanine 212–alanine 240. Residues alanine 241–leucine 266 form a helical membrane-spanning segment. Over cysteine 267 to asparagine 279 the chain is Extracellular. The chain crosses the membrane as a helical span at residues phenylalanine 280–phenylalanine 300. Residues arginine 301–tryptophan 317 lie on the Cytoplasmic side of the membrane. Cysteine 315 carries S-palmitoyl cysteine lipidation.

The protein belongs to the G-protein coupled receptor 1 family. Interacts with MGRN1, but does not undergo MGRN1-mediated ubiquitination; this interaction competes with GNAS-binding and thus inhibits agonist-induced cAMP production. Interacts with OPN3; the interaction results in a decrease in MC1R-mediated cAMP signaling and ultimately a decrease in melanin production in melanocytes.

The protein localises to the cell membrane. Receptor for MSH (alpha, beta and gamma) and ACTH. The activity of this receptor is mediated by G proteins which activate adenylate cyclase. Mediates melanogenesis, the production of eumelanin (black/brown) and phaeomelanin (red/yellow), via regulation of cAMP signaling in melanocytes. The polypeptide is Melanocyte-stimulating hormone receptor (MC1R) (Trachypithecus obscurus (Dusky leaf-monkey)).